A 131-amino-acid polypeptide reads, in one-letter code: UPF0212 protein TK1194 (131 aa).

The protein belongs to the UPF0212 family.

The polypeptide is UPF0212 protein TK1194 (Thermococcus kodakarensis (strain ATCC BAA-918 / JCM 12380 / KOD1) (Pyrococcus kodakaraensis (strain KOD1))).